Consider the following 177-residue polypeptide: Adenine phosphoribosyltransferase (177 aa).

The protein belongs to the purine/pyrimidine phosphoribosyltransferase family. As to quaternary structure, homodimer.

It localises to the cytoplasm. It carries out the reaction AMP + diphosphate = 5-phospho-alpha-D-ribose 1-diphosphate + adenine. It participates in purine metabolism; AMP biosynthesis via salvage pathway; AMP from adenine: step 1/1. In terms of biological role, catalyzes a salvage reaction resulting in the formation of AMP, that is energically less costly than de novo synthesis. The chain is Adenine phosphoribosyltransferase from Leptospira interrogans serogroup Icterohaemorrhagiae serovar copenhageni (strain Fiocruz L1-130).